The sequence spans 137 residues: MRILGLDVGTKTVGVAMSDEMGWTAQGLETIKINEERGHFGFDRISELVKQYNVDKIVVGLPKNMNGTIGPRGEACQQFAENLRELLQLDVVMWDERLSTMAAERLLISADVSRKKRKQVIDKMAAVVILQGFLDSK.

Belongs to the YqgF nuclease family.

The protein localises to the cytoplasm. Its function is as follows. Could be a nuclease involved in processing of the 5'-end of pre-16S rRNA. The polypeptide is Putative pre-16S rRNA nuclease (Bacillus cereus (strain G9842)).